Consider the following 185-residue polypeptide: Translation initiation factor IF-3 (185 aa).

It belongs to the IF-3 family. As to quaternary structure, monomer.

Its subcellular location is the cytoplasm. Its function is as follows. IF-3 binds to the 30S ribosomal subunit and shifts the equilibrium between 70S ribosomes and their 50S and 30S subunits in favor of the free subunits, thus enhancing the availability of 30S subunits on which protein synthesis initiation begins. This chain is Translation initiation factor IF-3, found in Rickettsia typhi (strain ATCC VR-144 / Wilmington).